The primary structure comprises 27 residues: Flagellar filament 34 kDa core protein (27 aa).

The protein belongs to the bacterial flagellin family. As to quaternary structure, the flagellum consists of an outer layer composed of repeating units of FlaA around a core that contains one or all of five antigenically related polypeptides.

Its subcellular location is the periplasmic flagellum. It localises to the periplasm. Its function is as follows. Component of the core of the flagella. This is Flagellar filament 34 kDa core protein from Spirochaeta aurantia.